A 1073-amino-acid polypeptide reads, in one-letter code: Self-sufficient cytochrome P450 monooxygenase CYP505AG1 (1073 aa).

C409 lines the heme pocket. One can recognise a Flavodoxin-like domain in the interval 501–644 (VTILYGSNSG…DLENWEDEHL (144 aa)). FMN contacts are provided by residues 507–511 (SNSGT) and 588–620 (VFAC…HRVA). Positions 680-909 (HNAVECIVSE…RPCKKQFHLP (230 aa)) constitute an FAD-binding FR-type domain.

The protein in the N-terminal section; belongs to the cytochrome P450 family. The cofactor is FAD. It depends on FMN as a cofactor. Requires heme as cofactor.

The enzyme catalyses 2 oxidized [cytochrome P450] + NADPH = 2 reduced [cytochrome P450] + NADP(+) + H(+). The catalysed reaction is an organic molecule + reduced [NADPH--hemoprotein reductase] + O2 = an alcohol + oxidized [NADPH--hemoprotein reductase] + H2O + H(+). It catalyses the reaction dodecanoate + reduced [NADPH--hemoprotein reductase] + O2 = 10-hydroxydodecanoate + oxidized [NADPH--hemoprotein reductase] + H2O + H(+). It carries out the reaction tetradecanoate + reduced [NADPH--hemoprotein reductase] + O2 = 12-hydroxytetradecanoate + oxidized [NADPH--hemoprotein reductase] + H2O + H(+). Its function is as follows. Self-sufficient cytochrome P450 monooxygenase that catalyzes the regioselective in-chain hydroxylation of alkanes, fatty alcohols, and fatty acids, giving sub-terminal hydroxylation by acting preferentially on the omega-2 position. Prefers fatty acids as substrates, since it hydroxylates the small amounts of dodecanoic acid formed in the presence of an excess of 1-dodecanol. In Oidiodendron maius (strain Zn), this protein is Self-sufficient cytochrome P450 monooxygenase CYP505AG1.